The sequence spans 288 residues: Bifunctional protein FolD (288 aa).

NADP(+)-binding positions include 166 to 168 and Ile232; that span reads GAS.

This sequence belongs to the tetrahydrofolate dehydrogenase/cyclohydrolase family. In terms of assembly, homodimer.

It carries out the reaction (6R)-5,10-methylene-5,6,7,8-tetrahydrofolate + NADP(+) = (6R)-5,10-methenyltetrahydrofolate + NADPH. The enzyme catalyses (6R)-5,10-methenyltetrahydrofolate + H2O = (6R)-10-formyltetrahydrofolate + H(+). The protein operates within one-carbon metabolism; tetrahydrofolate interconversion. Catalyzes the oxidation of 5,10-methylenetetrahydrofolate to 5,10-methenyltetrahydrofolate and then the hydrolysis of 5,10-methenyltetrahydrofolate to 10-formyltetrahydrofolate. The chain is Bifunctional protein FolD from Escherichia coli O139:H28 (strain E24377A / ETEC).